A 501-amino-acid chain; its full sequence is MFSNQYIQQRIHKANSLREEGKNPYQNGLKRSLTNAAFLEKYAYVKDLEEPKDKEKCESIVGRVKLLRLMGKACFIKVEDESAILQAYVSQNELNDEFKSLKKHLEVGDIVLVKGFPFATKTGELSVHALEFHILSKTIVPLPEKFHGLSDIELRYRQRYLDLIVNPGVKDVFKKRSLIVSSVRKFFEMEGFLEVETPMMHPIPGGANARPFITYHNALEVERYLRIAPELYLKRLIVGGFEAVFEINRNFRNEGMDHSHNPEFTMIEFYWAYHTYEDLIELSKRLFDYLLKTLNLPSKIIYNDMEVDFNQTSVISYLDALETIGGISKDILEKEDRLLAYLLEQGIKVEPNLTYGKLLAEAFDHFVEHQLINPTFVTQYPIEISPLARRNDSNPNIADRFELFIAGKEIANGFSELNDPLDQLERFKNQVAEKEKGDEEAQYMDEDYVWALAHGMPPTAGQGIGIDRLVMLLTGAKSIKDVILFPAMRPVKNDFNIESGE.

Mg(2+) contacts are provided by E402 and E409.

This sequence belongs to the class-II aminoacyl-tRNA synthetase family. Homodimer. Mg(2+) is required as a cofactor.

It localises to the cytoplasm. The enzyme catalyses tRNA(Lys) + L-lysine + ATP = L-lysyl-tRNA(Lys) + AMP + diphosphate. In Helicobacter pylori (strain HPAG1), this protein is Lysine--tRNA ligase.